Consider the following 126-residue polypeptide: UPF0102 protein plu4003 (126 aa).

This sequence belongs to the UPF0102 family.

This chain is UPF0102 protein plu4003, found in Photorhabdus laumondii subsp. laumondii (strain DSM 15139 / CIP 105565 / TT01) (Photorhabdus luminescens subsp. laumondii).